The sequence spans 408 residues: Aminopeptidase T (408 aa).

A divalent metal cation-binding residues include Glu250, Glu316, Glu340, His345, His376, and Asp378.

It belongs to the peptidase M29 family. Homodimer. It depends on Co(2+) as a cofactor. Zn(2+) is required as a cofactor. Requires Mg(2+) as cofactor.

Its function is as follows. Metal-dependent exopeptidase. This is Aminopeptidase T from Thermus thermophilus (strain ATCC 27634 / DSM 579 / HB8).